A 155-amino-acid polypeptide reads, in one-letter code: Putative pre-16S rRNA nuclease (155 aa).

This sequence belongs to the YqgF nuclease family.

It is found in the cytoplasm. Its function is as follows. Could be a nuclease involved in processing of the 5'-end of pre-16S rRNA. The protein is Putative pre-16S rRNA nuclease of Wolbachia sp. subsp. Brugia malayi (strain TRS).